The following is a 93-amino-acid chain: Sec-independent protein translocase protein TatA (93 aa).

The helical transmembrane segment at 1-21 (MGIFDWKHWIVILVVVVLVFG) threads the bilayer. The disordered stretch occupies residues 43 to 93 (MNDDEKPAEPVVPPAAQPVPPVQPQQSAPLNQPHTIDVQAQKVEEPTRKDS). Pro residues predominate over residues 52-65 (PVVPPAAQPVPPVQ). Residues 84-93 (KVEEPTRKDS) show a composition bias toward basic and acidic residues.

Belongs to the TatA/E family. The Tat system comprises two distinct complexes: a TatABC complex, containing multiple copies of TatA, TatB and TatC subunits, and a separate TatA complex, containing only TatA subunits. Substrates initially bind to the TatABC complex, which probably triggers association of the separate TatA complex to form the active translocon.

It is found in the cell inner membrane. Part of the twin-arginine translocation (Tat) system that transports large folded proteins containing a characteristic twin-arginine motif in their signal peptide across membranes. TatA could form the protein-conducting channel of the Tat system. The chain is Sec-independent protein translocase protein TatA from Pseudomonas fluorescens (strain ATCC BAA-477 / NRRL B-23932 / Pf-5).